The following is a 261-amino-acid chain: Ethanolamine ammonia-lyase small subunit (261 aa).

Residues valine 157, glutamate 178, and cysteine 207 each contribute to the adenosylcob(III)alamin site.

The protein belongs to the EutC family. As to quaternary structure, the basic unit is a heterodimer which dimerizes to form tetramers. The heterotetramers trimerize; 6 large subunits form a core ring with 6 small subunits projecting outwards. Adenosylcob(III)alamin is required as a cofactor.

It localises to the bacterial microcompartment. It carries out the reaction ethanolamine = acetaldehyde + NH4(+). It participates in amine and polyamine degradation; ethanolamine degradation. In terms of biological role, catalyzes the deamination of various vicinal amino-alcohols to oxo compounds. Allows this organism to utilize ethanolamine as the sole source of nitrogen and carbon in the presence of external vitamin B12. This chain is Ethanolamine ammonia-lyase small subunit, found in Rhodopseudomonas palustris (strain BisA53).